We begin with the raw amino-acid sequence, 307 residues long: Mycothiol acetyltransferase (307 aa).

2 consecutive N-acetyltransferase domains span residues 15–158 and 164–307; these read HTLD…LAEP and VTVR…RTES. Glu-46 contacts 1D-myo-inositol 2-(L-cysteinylamino)-2-deoxy-alpha-D-glucopyranoside. Position 90–92 (90–92) interacts with acetyl-CoA; sequence LVV. Residues Glu-191, Lys-230, and Glu-239 each contribute to the 1D-myo-inositol 2-(L-cysteinylamino)-2-deoxy-alpha-D-glucopyranoside site. Acetyl-CoA is bound by residues 243-245 and 250-256; these read VGV and QGGGLGK. Tyr-277 contacts 1D-myo-inositol 2-(L-cysteinylamino)-2-deoxy-alpha-D-glucopyranoside.

The protein belongs to the acetyltransferase family. MshD subfamily. In terms of assembly, monomer.

The catalysed reaction is 1D-myo-inositol 2-(L-cysteinylamino)-2-deoxy-alpha-D-glucopyranoside + acetyl-CoA = mycothiol + CoA + H(+). In terms of biological role, catalyzes the transfer of acetyl from acetyl-CoA to desacetylmycothiol (Cys-GlcN-Ins) to form mycothiol. The polypeptide is Mycothiol acetyltransferase (Streptomyces griseus subsp. griseus (strain JCM 4626 / CBS 651.72 / NBRC 13350 / KCC S-0626 / ISP 5235)).